Consider the following 291-residue polypeptide: 4-diphosphocytidyl-2-C-methyl-D-erythritol kinase (291 aa).

Lys-19 is an active-site residue. 102–112 (PMGGGIGGGSS) contacts ATP. Asp-144 is a catalytic residue.

The protein belongs to the GHMP kinase family. IspE subfamily.

It carries out the reaction 4-CDP-2-C-methyl-D-erythritol + ATP = 4-CDP-2-C-methyl-D-erythritol 2-phosphate + ADP + H(+). It functions in the pathway isoprenoid biosynthesis; isopentenyl diphosphate biosynthesis via DXP pathway; isopentenyl diphosphate from 1-deoxy-D-xylulose 5-phosphate: step 3/6. Catalyzes the phosphorylation of the position 2 hydroxy group of 4-diphosphocytidyl-2C-methyl-D-erythritol. This Ectopseudomonas mendocina (strain ymp) (Pseudomonas mendocina) protein is 4-diphosphocytidyl-2-C-methyl-D-erythritol kinase.